A 448-amino-acid chain; its full sequence is Probable sodium-coupled neutral amino acid transporter 6 (448 aa).

2 stretches are compositionally biased toward polar residues: residues 1–12 (MQASDSSINTLD) and 26–36 (LLANSPQRRSS). The interval 1–36 (MQASDSSINTLDGHQVSAGRDESTPLLANSPQRRSS) is disordered. 5 helical membrane-spanning segments follow: residues 40-60 (SFGFAVFNLMNAIMGSGILGL), 69-89 (ILGFSALLLIVALLAAYSIHL), 117-137 (LVACTILIQNVGAMSSYLFII), 164-184 (LLIITSVCIVLPLALLPKIGF), and 185-205 (LGYTSSLSFFFMVYFAVVIVI). Residues C212 and C232 are joined by a disulfide bond. Residues N218 and N228 are each glycosylated (N-linked (GlcNAc...) asparagine). Helical transmembrane passes span 244–264 (AFALPTMAFSFLCHTSVLPIY), 281–301 (VGIALSFLIYYISALFGYLTF), 321–341 (VLIITVRLCILLAVLLTVPLI), 365–385 (ILVTLVLNIIIVLLAIYVPDM), 388–408 (VFGVVGSTTSTCLLFVFPGLF), and 425–445 (ACGLLVLGICIGACSLTLIIM).

Belongs to the amino acid/polyamine transporter 2 family.

Its subcellular location is the cell membrane. Functionally, probable sodium-dependent amino acid/proton antiporter, could be a neuronal transporter for glutamate. The protein is Probable sodium-coupled neutral amino acid transporter 6 (slc38a6) of Xenopus tropicalis (Western clawed frog).